Here is a 588-residue protein sequence, read N- to C-terminus: uncharacterized protein (588 aa).

The next 7 helical transmembrane spans lie at 14–34, 49–69, 78–98, 184–204, 235–255, 257–274, and 275–292; these read FLLFLPYFIGLLFLGFIKGIV, AVILSLLPVHIVWTFYSIVSA, IFLCLCLPAAIILWPIVGILG, ALVVSVLGILVDPPVISLVAI, VPIAGLAILLWPLAVTGAVIG, VISSIFLGAYAGVVSYQE, and SSFYYGLCYIVASVSIYD. Residue S486 is modified to Phosphoserine. The disordered stretch occupies residues 566 to 588; sequence RKGSVNGSDQESQKGVSRNVDIV. Residues 570-581 show a composition bias toward polar residues; it reads VNGSDQESQKGV.

Its subcellular location is the membrane. This is an uncharacterized protein from Arabidopsis thaliana (Mouse-ear cress).